We begin with the raw amino-acid sequence, 349 residues long: Transmembrane protein 255A (349 aa).

The next 4 helical transmembrane spans lie at 30-50 (IYVT…GLAA), 57-77 (VTVG…LGII), 89-109 (LVAS…CAIV), and 226-246 (TILN…LGGF). A disordered region spans residues 303–329 (PSSPPSGLSDEPQSASPSPSYMWSSSA). Residues 316–329 (SASPSPSYMWSSSA) are compositionally biased toward low complexity.

This sequence belongs to the TMEM255 family.

It localises to the membrane. This chain is Transmembrane protein 255A (TMEM255A), found in Homo sapiens (Human).